Reading from the N-terminus, the 644-residue chain is Putative aldehyde dehydrogenase-like protein YHR039C (644 aa).

Asn-15 carries N-linked (GlcNAc...) asparagine glycosylation. Catalysis depends on Glu-354, which acts as the Proton acceptor. Catalysis depends on Cys-389, which acts as the Nucleophile. N-linked (GlcNAc...) asparagine glycans are attached at residues Asn-565 and Asn-627.

It belongs to the aldehyde dehydrogenase family. N-glycosylated.

Its subcellular location is the endoplasmic reticulum. The chain is Putative aldehyde dehydrogenase-like protein YHR039C (MSC7) from Saccharomyces cerevisiae (strain ATCC 204508 / S288c) (Baker's yeast).